A 289-amino-acid chain; its full sequence is ATP synthase gamma chain (289 aa).

It belongs to the ATPase gamma chain family. F-type ATPases have 2 components, CF(1) - the catalytic core - and CF(0) - the membrane proton channel. CF(1) has five subunits: alpha(3), beta(3), gamma(1), delta(1), epsilon(1). CF(0) has three main subunits: a, b and c.

It is found in the cell membrane. Functionally, produces ATP from ADP in the presence of a proton gradient across the membrane. The gamma chain is believed to be important in regulating ATPase activity and the flow of protons through the CF(0) complex. The protein is ATP synthase gamma chain of Mycoplasmoides gallisepticum (strain R(low / passage 15 / clone 2)) (Mycoplasma gallisepticum).